The primary structure comprises 260 residues: Recombination-promoting nuclease RpnD (260 aa).

It belongs to the Rpn/YhgA-like nuclease family.

In terms of biological role, a low activity DNA endonuclease probably yielding 3'-hydroxyl ends. Involved in RecA-independent recombination and horizontal gene transfer. The protein is Recombination-promoting nuclease RpnD (rpnD) of Escherichia coli O157:H7.